Here is a 125-residue protein sequence, read N- to C-terminus: Large ribosomal subunit protein mL51 (125 aa).

The transit peptide at 1-29 directs the protein to the mitochondrion; that stretch reads MWSVQKLLWGCRSLLPQGCRSFSLGNRDL.

It belongs to the mitochondrion-specific ribosomal protein mL51 family. In terms of assembly, component of the mitochondrial ribosome large subunit (39S) which comprises a 16S rRNA and about 50 distinct proteins.

Its subcellular location is the mitochondrion. This Xenopus laevis (African clawed frog) protein is Large ribosomal subunit protein mL51 (mrpl51).